Consider the following 643-residue polypeptide: Inner kinetochore subunit cnp3 (643 aa).

Disordered regions lie at residues 55-209 (SIHL…AFPD) and 224-386 (SIKD…QSDS). 2 stretches are compositionally biased toward low complexity: residues 85-97 (AASD…SSSD) and 104-125 (DIPS…GSSG). The segment covering 166 to 185 (DFSRIKASPDRKKFEPRRST) has biased composition (basic and acidic residues). Composition is skewed to polar residues over residues 235 to 261 (YIQT…PSKQ), 295 to 304 (LNRSLANNSQ), and 313 to 322 (KPLQESSINS). Basic residues-rich tracts occupy residues 332–341 (VKRKRGRPRK) and 360–370 (GAKKPAIRNAK). The a.T hook DNA-binding region spans 333–345 (KRKRGRPRKNKLE).

Belongs to the CENP-C/MIF2 family. Component of the inner kinetochore constitutive centromere-associated network (CCAN) (also known as central kinetochore Sim4 complex in fission yeast), which is composed of at least cnl2, cnp3, cnp20, fta1, fta2, fta3, fta4, fta6, fta7, mal2, mhf1, mhf2, mis6, mis15, mis17, sim4 and wip1.

It is found in the nucleus. It localises to the nucleoplasm. Component of the kinetochore, a multiprotein complex that assembles on centromeric DNA and attaches chromosomes to spindle microtubules, mediating chromosome segregation and sister chromatid segregation during meiosis and mitosis. Component of the inner kinetochore constitutive centromere-associated network (CCAN), which serves as a structural platform for outer kinetochore assembly. In Schizosaccharomyces pombe (strain 972 / ATCC 24843) (Fission yeast), this protein is Inner kinetochore subunit cnp3 (cnp3).